Reading from the N-terminus, the 317-residue chain is Apolipoprotein E (317 aa).

Residues Met-1–Ala-18 form the signal peptide. O-linked (GalNAc...) threonine glycosylation is found at Thr-26 and Thr-36. A run of 8 repeats spans residues Ala-80–Thr-101, Pro-102–Gly-123, Ala-124–Gly-145, Gln-146–Leu-167, Arg-168–Glu-189, Arg-190–Ala-211, Thr-212–Arg-233, and Ala-234–Ala-255. The 8 X 22 AA approximate tandem repeats stretch occupies residues Ala-80–Ala-255. N-linked (Glc) (glycation) lysine glycosylation is present at Lys-93. The residue at position 143 (Met-143) is a Methionine sulfoxide. Ser-147 is subject to Phosphoserine; by FAM20C. The segment at His-158 to Arg-168 is LDL and other lipoprotein receptors binding. Leu-162–Arg-165 lines the heparin pocket. Residues Ala-210–Met-290 are lipid-binding and lipoprotein association. An O-linked (GalNAc...) threonine glycan is attached at Thr-212. Gly-229 to Met-236 lines the heparin pocket. A homooligomerization region spans residues Gln-266 to His-317. The specificity for association with VLDL stretch occupies residues Arg-278 to Met-290. Thr-307 carries O-linked (GalNAc...) threonine glycosylation. O-linked (GalNAc...) serine glycans are attached at residues Ser-308 and Ser-314.

Belongs to the apolipoprotein A1/A4/E family. As to quaternary structure, homotetramer. May interact with ABCA1; functionally associated with ABCA1 in the biogenesis of HDLs. May interact with APP/A4 amyloid-beta peptide; the interaction is extremely stable in vitro but its physiological significance is unclear. May interact with MAPT. May interact with MAP2. In the cerebrospinal fluid, interacts with secreted SORL1. Interacts with PMEL; this allows the loading of PMEL luminal fragment on ILVs to induce fibril nucleation. (Microbial infection) Interacts with hepatitis C virus (HCV) envelope glycoprotein E2; this interaction is required for HCV infectivity and production. APOE exists as multiple glycosylated and sialylated glycoforms within cells and in plasma. The extent of glycosylation and sialylation are tissue and context specific. Plasma APOE undergoes desialylation and is less glycosylated and sialylated than the cellular form. Glycosylation is not required for proper expression and secretion. O-glycosylated with core 1 or possibly core 8 glycans. Thr-307 and Ser-314 are minor glycosylation sites compared to Ser-308. In terms of processing, glycated in plasma VLDL of normal subjects, and of hyperglycemic diabetic patients at a higher level (2-3 fold). Post-translationally, phosphorylated by FAM20C in the extracellular medium. Undergoes C-terminal proteolytic processing in neurons. C-terminally truncated APOE has a tendency to form neurotoxic intracellular neurofibrillary tangle-like inclusions in neurons. As to expression, produced by several tissues and cell types and mainly found associated with lipid particles in the plasma, the interstitial fluid and lymph. Mainly synthesized by liver hepatocytes. Significant quantities are also produced in brain, mainly by astrocytes and glial cells in the cerebral cortex, but also by neurons in frontal cortex and hippocampus. It is also expressed by cells of the peripheral nervous system. Also expressed by adrenal gland, testis, ovary, skin, kidney, spleen and adipose tissue and macrophages in various tissues.

It is found in the secreted. The protein resides in the extracellular space. Its subcellular location is the extracellular matrix. The protein localises to the extracellular vesicle. It localises to the endosome. It is found in the multivesicular body. Functionally, APOE is an apolipoprotein, a protein associating with lipid particles, that mainly functions in lipoprotein-mediated lipid transport between organs via the plasma and interstitial fluids. APOE is a core component of plasma lipoproteins and is involved in their production, conversion and clearance. Apolipoproteins are amphipathic molecules that interact both with lipids of the lipoprotein particle core and the aqueous environment of the plasma. As such, APOE associates with chylomicrons, chylomicron remnants, very low density lipoproteins (VLDL) and intermediate density lipoproteins (IDL) but shows a preferential binding to high-density lipoproteins (HDL). It also binds a wide range of cellular receptors including the LDL receptor/LDLR, the LDL receptor-related proteins LRP1, LRP2 and LRP8 and the very low-density lipoprotein receptor/VLDLR that mediate the cellular uptake of the APOE-containing lipoprotein particles. Finally, APOE also has a heparin-binding activity and binds heparan-sulfate proteoglycans on the surface of cells, a property that supports the capture and the receptor-mediated uptake of APOE-containing lipoproteins by cells. A main function of APOE is to mediate lipoprotein clearance through the uptake of chylomicrons, VLDLs, and HDLs by hepatocytes. APOE is also involved in the biosynthesis by the liver of VLDLs as well as their uptake by peripheral tissues ensuring the delivery of triglycerides and energy storage in muscle, heart and adipose tissues. By participating in the lipoprotein-mediated distribution of lipids among tissues, APOE plays a critical role in plasma and tissues lipid homeostasis. APOE is also involved in two steps of reverse cholesterol transport, the HDLs-mediated transport of cholesterol from peripheral tissues to the liver, and thereby plays an important role in cholesterol homeostasis. First, it is functionally associated with ABCA1 in the biogenesis of HDLs in tissues. Second, it is enriched in circulating HDLs and mediates their uptake by hepatocytes. APOE also plays an important role in lipid transport in the central nervous system, regulating neuron survival and sprouting. APOE is also involved in innate and adaptive immune responses, controlling for instance the survival of myeloid-derived suppressor cells. Binds to the immune cell receptor LILRB4. APOE may also play a role in transcription regulation through a receptor-dependent and cholesterol-independent mechanism, that activates MAP3K12 and a non-canonical MAPK signal transduction pathway that results in enhanced AP-1-mediated transcription of APP. Its function is as follows. (Microbial infection) Through its interaction with HCV envelope glycoprotein E2, participates in the attachment of HCV to HSPGs and other receptors (LDLr, VLDLr, and SR-B1) on the cell surface and to the assembly, maturation and infectivity of HCV viral particles. This interaction is probably promoted via the up-regulation of cellular autophagy by the virus. The protein is Apolipoprotein E of Homo sapiens (Human).